We begin with the raw amino-acid sequence, 415 residues long: Gamma-glutamyl phosphate reductase (415 aa).

It belongs to the gamma-glutamyl phosphate reductase family.

The protein localises to the cytoplasm. The catalysed reaction is L-glutamate 5-semialdehyde + phosphate + NADP(+) = L-glutamyl 5-phosphate + NADPH + H(+). Its pathway is amino-acid biosynthesis; L-proline biosynthesis; L-glutamate 5-semialdehyde from L-glutamate: step 2/2. Catalyzes the NADPH-dependent reduction of L-glutamate 5-phosphate into L-glutamate 5-semialdehyde and phosphate. The product spontaneously undergoes cyclization to form 1-pyrroline-5-carboxylate. In Listeria monocytogenes serotype 4b (strain F2365), this protein is Gamma-glutamyl phosphate reductase.